The following is a 360-amino-acid chain: Probable neutral protease 2 homolog MCYG_04257 (360 aa).

The signal sequence occupies residues 1-17 (MQLIAFLAALGVPVAFA). The propeptide occupies 18–182 (ATIPSVPLNH…KVKAGSIDKR (165 aa)). C190 and C261 are disulfide-bonded. N-linked (GlcNAc...) asparagine glycosylation is present at N262. Intrachain disulfides connect C268–C286 and C300–C360. H311 is a binding site for Zn(2+). Residue E312 is part of the active site. H315 and D326 together coordinate Zn(2+).

The protein belongs to the peptidase M35 family. It depends on Zn(2+) as a cofactor.

The protein resides in the secreted. The catalysed reaction is Preferential cleavage of bonds with hydrophobic residues in P1'. Also 3-Asn-|-Gln-4 and 8-Gly-|-Ser-9 bonds in insulin B chain.. Functionally, probable secreted metalloprotease that shows high activities on basic nuclear substrates such as histone and protamine. May be involved in virulence. The polypeptide is Probable neutral protease 2 homolog MCYG_04257 (Arthroderma otae (strain ATCC MYA-4605 / CBS 113480) (Microsporum canis)).